The chain runs to 189 residues: Interleukin-23 subunit alpha (189 aa).

The N-terminal stretch at 1–19 is a signal peptide; that stretch reads MLGSTAVMLLLLLPWTAQT.

It belongs to the IL-6 superfamily. As to quaternary structure, heterodimer with IL12B; disulfide-linked. The heterodimer is known as interleukin IL-23. Interacts with IL23R; this interaction enables recruitment of IL12RB1.

Its subcellular location is the secreted. Associates with IL12B to form the pro-inflammatory cytokine IL-23 that plays different roles in innate and adaptive immunity. Released by antigen-presenting cells such as dendritic cells or macrophages, binds to a heterodimeric receptor complex composed of IL12RB1 and IL23R to activate JAK2 and TYK2 which then phosphorylate the receptor to form a docking site leading to the phosphorylation of STAT3 and STAT4. This process leads to activation of several pathways including p38 MAPK or NF-kappa-B and promotes the production of pro-inflammatory cytokines such as interleukin-17A/IL17A. In turn, participates in the early and effective intracellular bacterial clearance. Promotes the expansion and survival of T-helper 17 cells, a CD4-positive helper T-cell subset that produces IL-17, as well as other IL-17-producing cells. The protein is Interleukin-23 subunit alpha (IL23A) of Cavia porcellus (Guinea pig).